The primary structure comprises 272 residues: MSYLQESNRKAVTVTSLQAMRAAGERIVMLTAYDSSFAALMDRNGTDVLLVGDSLGNVMQGQKTTLPVTLEHIVYHTECVSRGTTKALLVSDLPFGTYGTPEQAFHSAVRVMQAGAQMVKLEGGVWLAPTIKFLVERSIPVCAHIGLTPQSVHAFGGFKVQGRGDEAAAQLKADALAVQDAGAQLVVMEAIPAGLAGEVTRLLAIPTIGIGAGLECSGQVLVMHDMLGVFPGHRPKFVRNFMDGQTTIDGAVAAYVAAVKDGTFPGPEHTFA.

The Mg(2+) site is built by D53 and D92. 3-methyl-2-oxobutanoate is bound by residues 53 to 54 (DS), D92, and K120. E122 lines the Mg(2+) pocket. The active-site Proton acceptor is E189.

It belongs to the PanB family. In terms of assembly, homodecamer; pentamer of dimers. Requires Mg(2+) as cofactor.

Its subcellular location is the cytoplasm. The catalysed reaction is 3-methyl-2-oxobutanoate + (6R)-5,10-methylene-5,6,7,8-tetrahydrofolate + H2O = 2-dehydropantoate + (6S)-5,6,7,8-tetrahydrofolate. The protein operates within cofactor biosynthesis; (R)-pantothenate biosynthesis; (R)-pantoate from 3-methyl-2-oxobutanoate: step 1/2. In terms of biological role, catalyzes the reversible reaction in which hydroxymethyl group from 5,10-methylenetetrahydrofolate is transferred onto alpha-ketoisovalerate to form ketopantoate. This is 3-methyl-2-oxobutanoate hydroxymethyltransferase from Ralstonia pickettii (strain 12J).